We begin with the raw amino-acid sequence, 241 residues long: Uridylate kinase (241 aa).

Residue 9–10 (GS) participates in ATP binding. Residue glycine 44 participates in UMP binding. Residues glycine 45 and arginine 49 each coordinate ATP. UMP contacts are provided by residues aspartate 66 and 114 to 120 (VVAGQTT). The ATP site is built by threonine 140, phenylalanine 146, and aspartate 149.

The protein belongs to the UMP kinase family. In terms of assembly, homohexamer.

The protein resides in the cytoplasm. It carries out the reaction UMP + ATP = UDP + ADP. It participates in pyrimidine metabolism; CTP biosynthesis via de novo pathway; UDP from UMP (UMPK route): step 1/1. Its activity is regulated as follows. Inhibited by UTP. Functionally, catalyzes the reversible phosphorylation of UMP to UDP. The polypeptide is Uridylate kinase (Halobacterium salinarum (strain ATCC 29341 / DSM 671 / R1)).